Reading from the N-terminus, the 442-residue chain is 3-phosphoshikimate 1-carboxyvinyltransferase (442 aa).

The 3-phosphoshikimate site is built by K25, S26, and R30. K25 provides a ligand contact to phosphoenolpyruvate. 2 residues coordinate phosphoenolpyruvate: G97 and R125. Positions 170, 171, 172, 323, and 350 each coordinate 3-phosphoshikimate. Position 172 (Q172) interacts with phosphoenolpyruvate. Catalysis depends on D323, which acts as the Proton acceptor. Residues R354 and R399 each coordinate phosphoenolpyruvate.

The protein belongs to the EPSP synthase family. As to quaternary structure, monomer.

It localises to the cytoplasm. The enzyme catalyses 3-phosphoshikimate + phosphoenolpyruvate = 5-O-(1-carboxyvinyl)-3-phosphoshikimate + phosphate. It participates in metabolic intermediate biosynthesis; chorismate biosynthesis; chorismate from D-erythrose 4-phosphate and phosphoenolpyruvate: step 6/7. In terms of biological role, catalyzes the transfer of the enolpyruvyl moiety of phosphoenolpyruvate (PEP) to the 5-hydroxyl of shikimate-3-phosphate (S3P) to produce enolpyruvyl shikimate-3-phosphate and inorganic phosphate. The chain is 3-phosphoshikimate 1-carboxyvinyltransferase from Bartonella tribocorum (strain CIP 105476 / IBS 506).